The following is a 118-amino-acid chain: NAD(P)H-quinone oxidoreductase subunit M (118 aa).

Belongs to the complex I NdhM subunit family. NDH-1 can be composed of about 15 different subunits; different subcomplexes with different compositions have been identified which probably have different functions.

The protein resides in the cellular thylakoid membrane. The catalysed reaction is a plastoquinone + NADH + (n+1) H(+)(in) = a plastoquinol + NAD(+) + n H(+)(out). The enzyme catalyses a plastoquinone + NADPH + (n+1) H(+)(in) = a plastoquinol + NADP(+) + n H(+)(out). Functionally, NDH-1 shuttles electrons from an unknown electron donor, via FMN and iron-sulfur (Fe-S) centers, to quinones in the respiratory and/or the photosynthetic chain. The immediate electron acceptor for the enzyme in this species is believed to be plastoquinone. Couples the redox reaction to proton translocation, and thus conserves the redox energy in a proton gradient. Cyanobacterial NDH-1 also plays a role in inorganic carbon-concentration. This is NAD(P)H-quinone oxidoreductase subunit M from Trichormus variabilis (strain ATCC 29413 / PCC 7937) (Anabaena variabilis).